The chain runs to 311 residues: MYRLLAPAKINLFLQIIGNCLDGSGYHELVMVMQAVSLMDRLELIPRRDREIKVHCTNPAVPCDQRNLAYKAAALLQQHFPDRDGVEIFIEKRIPLGAGLAGGSTNAAAVLVGLDLLWQLGLTQGELQTLAAQLGADVPFCLQGGTALALGRGEQLTPLADLQGLTVILGKYRSLSVATPWAYQTYRQEFAATYAQTPSEQEKARQEGGSAILLQAIQQHDIAPLAANLRNDLEKVVLPRYPLVAELKEQFLAAGAIASMMSGSGPTVFALAPSADEGYRIMQRVRRALPDPDLDLWVCECCPHGIQLETS.

Residue Lys-9 is part of the active site. 95 to 105 (PLGAGLAGGST) serves as a coordination point for ATP. Asp-137 is a catalytic residue.

It belongs to the GHMP kinase family. IspE subfamily.

The catalysed reaction is 4-CDP-2-C-methyl-D-erythritol + ATP = 4-CDP-2-C-methyl-D-erythritol 2-phosphate + ADP + H(+). Its pathway is isoprenoid biosynthesis; isopentenyl diphosphate biosynthesis via DXP pathway; isopentenyl diphosphate from 1-deoxy-D-xylulose 5-phosphate: step 3/6. Catalyzes the phosphorylation of the position 2 hydroxy group of 4-diphosphocytidyl-2C-methyl-D-erythritol. The chain is 4-diphosphocytidyl-2-C-methyl-D-erythritol kinase from Thermosynechococcus vestitus (strain NIES-2133 / IAM M-273 / BP-1).